Here is a 64-residue protein sequence, read N- to C-terminus: Defensin-like protein 41 (64 aa).

The segment at 1–21 is disordered; that stretch reads MTQGKRKHPCDLKNPSKRAPP. 4 disulfide bridges follow: C10–C61, C24–C47, C33–C56, and C37–C58.

Belongs to the DEFL family.

This Arabidopsis thaliana (Mouse-ear cress) protein is Defensin-like protein 41.